The following is a 232-amino-acid chain: Protein shisa-3 (232 aa).

The first 19 residues, 1-19 (MRLLGCFFLIFLTWGSARA), serve as a signal peptide directing secretion. The Lumenal portion of the chain corresponds to 20 to 93 (QGEYCHGWLD…GVSAQPVYVP (74 aa)). Residues 94–114 (FLIVGSIFIAFIIVGSLVAVY) form a helical membrane-spanning segment. Residues 115-232 (CCTCLRPKQT…NKSCPDFRQS (118 aa)) lie on the Cytoplasmic side of the membrane. Positions 146–185 (TSGNLRTPSRQSSTATSSTSTGGSVRRLSSSRADPGYLVS) are disordered. The segment covering 151–177 (RTPSRQSSTATSSTSTGGSVRRLSSSR) has biased composition (low complexity).

It belongs to the shisa family. As to quaternary structure, interacts with fzd8 and fgfr1.

It is found in the endoplasmic reticulum membrane. In terms of biological role, plays an essential role in the maturation of presomitic mesoderm cells by individual attenuation of both fgf and wnt signaling. Regulates head and somite developmen. Inhibits both wnt and fgf signaling through the regulation of protein maturation and cell surface transportation of their receptors within the endoplasmic reticulum. This is Protein shisa-3 (shisa3) from Xenopus laevis (African clawed frog).